A 282-amino-acid chain; its full sequence is Bis(5'-nucleosyl)-tetraphosphatase, symmetrical (282 aa).

It belongs to the Ap4A hydrolase family.

It carries out the reaction P(1),P(4)-bis(5'-adenosyl) tetraphosphate + H2O = 2 ADP + 2 H(+). In terms of biological role, hydrolyzes diadenosine 5',5'''-P1,P4-tetraphosphate to yield ADP. The polypeptide is Bis(5'-nucleosyl)-tetraphosphatase, symmetrical (Burkholderia thailandensis (strain ATCC 700388 / DSM 13276 / CCUG 48851 / CIP 106301 / E264)).